The sequence spans 319 residues: Acetyl esterase (319 aa).

The short motif at 91 to 93 (HGG) is the Involved in the stabilization of the negatively charged intermediate by the formation of the oxyanion hole element. Residues Ser165, Asp262, and His292 contribute to the active site.

It belongs to the 'GDXG' lipolytic enzyme family. In terms of assembly, homodimer. Interacts with MalT and MelA.

It is found in the cytoplasm. Functionally, displays esterase activity towards short chain fatty esters (acyl chain length of up to 8 carbons). Able to hydrolyze triacetylglycerol (triacetin) and tributyrylglycerol (tributyrin), but not trioleylglycerol (triolein) or cholesterol oleate. Negatively regulates MalT activity by antagonizing maltotriose binding. Inhibits MelA galactosidase activity. The sequence is that of Acetyl esterase from Shigella boydii serotype 18 (strain CDC 3083-94 / BS512).